A 381-amino-acid chain; its full sequence is 4-hydroxyphenylpyruvate dioxygenase (381 aa).

2 VOC domains span residues 22–156 (GMDA…LVER) and 184–338 (AVDH…IFTK). 3 residues coordinate Fe cation: histidine 187, histidine 270, and glutamate 349.

It belongs to the 4HPPD family. In terms of assembly, homodimer. Requires Fe cation as cofactor.

It catalyses the reaction 3-(4-hydroxyphenyl)pyruvate + O2 = homogentisate + CO2. The protein operates within amino-acid degradation; L-phenylalanine degradation; acetoacetate and fumarate from L-phenylalanine: step 3/6. This chain is 4-hydroxyphenylpyruvate dioxygenase (hpd), found in Streptomyces coelicolor (strain ATCC BAA-471 / A3(2) / M145).